Consider the following 848-residue polypeptide: Translation initiation factor IF-2 (848 aa).

Residues 90–253 (RTYIKRAELQ…PKEKRHAFER (164 aa)) form a disordered region. Over residues 105-170 (EAPAPEEPVQ…SAEPAIAPED (66 aa)) the composition is skewed to low complexity. 2 stretches are compositionally biased toward basic residues: residues 204–215 (PKKKQAGHRGPR) and 236–248 (KPLRAKKKPKEKR). A tr-type G domain is found at 344–511 (KRAPVVSVMG…AVLLQAEILE (168 aa)). Residues 353–360 (GHVDHGKT) are G1. 353-360 (GHVDHGKT) is a binding site for GTP. Residues 378-382 (GITQH) form a G2 region. Positions 399–402 (DTPG) are G3. Residues 399–403 (DTPGH) and 453–456 (NKMD) each bind GTP. A G4 region spans residues 453–456 (NKMD). The tract at residues 489–491 (SAH) is G5.

This sequence belongs to the TRAFAC class translation factor GTPase superfamily. Classic translation factor GTPase family. IF-2 subfamily.

Its subcellular location is the cytoplasm. One of the essential components for the initiation of protein synthesis. Protects formylmethionyl-tRNA from spontaneous hydrolysis and promotes its binding to the 30S ribosomal subunits. Also involved in the hydrolysis of GTP during the formation of the 70S ribosomal complex. This Marinobacter nauticus (strain ATCC 700491 / DSM 11845 / VT8) (Marinobacter aquaeolei) protein is Translation initiation factor IF-2.